Reading from the N-terminus, the 104-residue chain is uncharacterized protein (104 aa).

This is an uncharacterized protein from Saccharomyces cerevisiae (strain ATCC 204508 / S288c) (Baker's yeast).